A 316-amino-acid polypeptide reads, in one-letter code: 2,3-dihydroxyphenylpropionate/2,3-dihydroxicinnamic acid 1,2-dioxygenase (316 aa).

Catalysis depends on H115, which acts as the Proton donor. H179 acts as the Proton acceptor in catalysis.

This sequence belongs to the LigB/MhpB extradiol dioxygenase family. As to quaternary structure, homotetramer. It depends on Fe(2+) as a cofactor.

It catalyses the reaction 3-(2,3-dihydroxyphenyl)propanoate + O2 = (2Z,4E)-2-hydroxy-6-oxonona-2,4-dienedioate + H(+). The enzyme catalyses (2E)-3-(2,3-dihydroxyphenyl)prop-2-enoate + O2 = (2Z,4E,7E)-2-hydroxy-6-oxonona-2,4,7-trienedioate + H(+). The protein operates within aromatic compound metabolism; 3-phenylpropanoate degradation. In terms of biological role, catalyzes the non-heme iron(II)-dependent oxidative cleavage of 2,3-dihydroxyphenylpropionic acid and 2,3-dihydroxicinnamic acid into 2-hydroxy-6-ketononadienedioate and 2-hydroxy-6-ketononatrienedioate, respectively. This is 2,3-dihydroxyphenylpropionate/2,3-dihydroxicinnamic acid 1,2-dioxygenase from Paraburkholderia xenovorans (strain LB400).